The primary structure comprises 256 residues: Protein CC2D2B homolog (256 aa).

The disordered stretch occupies residues 1-24; it reads MSEEMDNVTAEEITDKHLQKDLDA. Over residues 13 to 22 the composition is skewed to basic and acidic residues; it reads ITDKHLQKDL. 2 coiled-coil regions span residues 136–159 and 194–214; these read DLLKVKAADYEDDQEQIKKQKANI and EIYKKTCNKMENRLLKLEEGK.

This chain is Protein CC2D2B homolog, found in Macaca fascicularis (Crab-eating macaque).